A 582-amino-acid polypeptide reads, in one-letter code: Histone deacetylase 9-B (582 aa).

Residues 146–195 (SNEVKQKLQEFLLSKSTKDITLNGIPQKITQSSKLWYTASHHTSLEQSSP) are interaction with mef2. Polar residues predominate over residues 189 to 205 (SLEQSSPPLGGASSSCK). Disordered regions lie at residues 189–254 (SLEQ…KEGN), 270–314 (TASS…QSRL), 409–447 (LSSG…RTQS), and 496–567 (VHLQ…NQSS). 2 stretches are compositionally biased toward basic and acidic residues: residues 213-224 (DYRDDFPLRKTV) and 238-253 (KVAE…RKEG). Residues 270-289 (TASSSAPGSGPSSPNGACSA) show a composition bias toward low complexity. Residues 295–314 (GPSSLPVTTRTERWPSQSRL) are compositionally biased toward polar residues.

It belongs to the histone deacetylase family. HD type 2 subfamily. Homodimer. Interacts with mef2.

The protein resides in the nucleus. It catalyses the reaction N(6)-acetyl-L-lysyl-[histone] + H2O = L-lysyl-[histone] + acetate. Functionally, devoided of intrinsic deacetylase activity, promotes the deacetylation of lysine residues on the N-terminal part of the core histones (H2A, H2B, H3 and H4) by recruiting other histone deacetylases. Histone deacetylation gives a tag for epigenetic repression and plays an important role in transcriptional regulation, cell cycle progression and developmental events. Represses MEF2-dependent transcription. In Danio rerio (Zebrafish), this protein is Histone deacetylase 9-B (hdac9b).